Here is a 1131-residue protein sequence, read N- to C-terminus: Protein DWARF 53 (1131 aa).

In terms of domain architecture, Clp R spans 8–181 (ARQCLSPAAV…KLAILRPAPP (174 aa)). Repeat regions lie at residues 12–85 (LSPA…LDRL) and 103–181 (VSNS…PAPP). The interval 511 to 574 (NRDPYKPFPR…ISSPSVTNKR (64 aa)) is disordered. Residues 558 to 569 (SSSTARPISSPS) are compositionally biased toward low complexity. Positions 578–582 (LVLNL) match the EAR 1 motif. The tract at residues 588–655 (KSDENLQERG…KRVEDSERSV (68 aa)) is disordered. Polar residues predominate over residues 597–609 (GMQSQHGTLSNVD). Residues 646–655 (KRVEDSERSV) are compositionally biased toward basic and acidic residues. The short motif at 799–803 (LDLNL) is the EAR 2 element. Disordered stretches follow at residues 951-970 (ISDD…RLHR) and 976-1002 (FDLN…NSYG). The short motif at 976 to 981 (FDLNLP) is the EAR 3 element. Residues 982–993 (VDEDEPLDADDD) are compositionally biased toward acidic residues.

It belongs to the ClpA/ClpB family. In terms of assembly, interacts with D3. Interacts with D14. The interaction with D14 is enhanced in the presence of strigolactones. The interaction with D14 occurs in the presence of (2'R) stereoisomers of strigolactones, but not (2'S) stereoisomers. Interacts with the TOPLESS-related proteins TPR1, TPR2 and TPR3. Interacts with SPL14/IPA1. In terms of processing, polyubiquitinated. Strigolactone, but not karrikin, triggers rapid SCF(D3)-dependent degradation via the proteasome. Expressed in the shoot bases of seedlings, young leaves, axillary buds and young panicles. Expressed in young roots vasculature, culms, internodes and nodes, preferentially in the parenchyma cells surrounding the xylem.

Its subcellular location is the nucleus. Functionally, repressor of strigolactones (SL) signaling. Subjected to a negative feedback control of SL signaling. Suppresses the transcriptional activation activity of SPL14/IPA1 in SL signaling. Acts with SPL14/IPA1 to mediate the SL-regulated tiller development. Subject to a negative feedback regulation by SPL14/IPA1, which binds to D53 promoter to repress D53 gene expression. The polypeptide is Protein DWARF 53 (Oryza sativa subsp. japonica (Rice)).